Here is a 293-residue protein sequence, read N- to C-terminus: Pyridoxal 5'-phosphate synthase subunit PdxS (293 aa).

D-ribose 5-phosphate is bound at residue aspartate 23. Residue lysine 80 is the Schiff-base intermediate with D-ribose 5-phosphate of the active site. Glycine 152 provides a ligand contact to D-ribose 5-phosphate. Arginine 164 lines the D-glyceraldehyde 3-phosphate pocket. D-ribose 5-phosphate is bound by residues glycine 213 and 234 to 235 (GS).

The protein belongs to the PdxS/SNZ family. In the presence of PdxT, forms a dodecamer of heterodimers.

The enzyme catalyses aldehydo-D-ribose 5-phosphate + D-glyceraldehyde 3-phosphate + L-glutamine = pyridoxal 5'-phosphate + L-glutamate + phosphate + 3 H2O + H(+). It functions in the pathway cofactor biosynthesis; pyridoxal 5'-phosphate biosynthesis. Catalyzes the formation of pyridoxal 5'-phosphate from ribose 5-phosphate (RBP), glyceraldehyde 3-phosphate (G3P) and ammonia. The ammonia is provided by the PdxT subunit. Can also use ribulose 5-phosphate and dihydroxyacetone phosphate as substrates, resulting from enzyme-catalyzed isomerization of RBP and G3P, respectively. This chain is Pyridoxal 5'-phosphate synthase subunit PdxS, found in Dehalococcoides mccartyi (strain ATCC BAA-2266 / KCTC 15142 / 195) (Dehalococcoides ethenogenes (strain 195)).